Reading from the N-terminus, the 279-residue chain is 1D-myo-inositol 2-acetamido-2-deoxy-alpha-D-glucopyranoside deacetylase (279 aa).

Positions 12, 15, and 146 each coordinate Zn(2+).

Belongs to the MshB deacetylase family. Zn(2+) is required as a cofactor.

The enzyme catalyses 1D-myo-inositol 2-acetamido-2-deoxy-alpha-D-glucopyranoside + H2O = 1D-myo-inositol 2-amino-2-deoxy-alpha-D-glucopyranoside + acetate. Catalyzes the deacetylation of 1D-myo-inositol 2-acetamido-2-deoxy-alpha-D-glucopyranoside (GlcNAc-Ins) in the mycothiol biosynthesis pathway. The protein is 1D-myo-inositol 2-acetamido-2-deoxy-alpha-D-glucopyranoside deacetylase of Mycobacteroides abscessus (strain ATCC 19977 / DSM 44196 / CCUG 20993 / CIP 104536 / JCM 13569 / NCTC 13031 / TMC 1543 / L948) (Mycobacterium abscessus).